We begin with the raw amino-acid sequence, 463 residues long: Quinolone resistance protein NorB (463 aa).

14 helical membrane passes run isoleucine 17–valine 37, isoleucine 53–alanine 73, isoleucine 86–isoleucine 106, isoleucine 107–isoleucine 127, tyrosine 142–alanine 162, leucine 165–isoleucine 185, phenylalanine 201–threonine 221, serine 230–leucine 250, threonine 273–valine 293, tyrosine 299–isoleucine 319, proline 334–leucine 354, isoleucine 357–tyrosine 377, methionine 403–valine 423, and isoleucine 435–valine 455.

The protein belongs to the major facilitator superfamily. TCR/Tet family.

The protein localises to the cell membrane. In terms of biological role, multidrug efflux pump that acts independently of NorA and is one of the factors that confers resistance against diverse quinolones and chemical compounds. The polypeptide is Quinolone resistance protein NorB (norB) (Staphylococcus aureus (strain Mu3 / ATCC 700698)).